Here is a 1972-residue protein sequence, read N- to C-terminus: Myosin-11 (1972 aa).

Residues serine 8, serine 23, and serine 40 each carry the phosphoserine modification. The region spanning 31-81 (AAKRLVWVPSEKQGFEAASIKEEKGDEVVVELVENGKKVTVGKDDIQKMNP) is the Myosin N-terminal SH3-like domain. Residues 85-783 (SKVEDMAELT…VLAHLEEERD (699 aa)) enclose the Myosin motor domain. At lysine 129 the chain carries N6,N6,N6-trimethyllysine. 178–185 (GESGAGKT) contacts ATP. Actin-binding regions lie at residues 661-683 (LGKL…IPNH) and 762-776 (RIGQ…GVLA). An IQ domain is found at 786–815 (ITDVIMAFQAMCRGYLARKAFAKRQQQLTA). Residues 844-1934 (LLQVTRQEEE…KSKLRRGNET (1091 aa)) are a coiled coil. Positions 858 to 882 (EDELQKTKERQQKAENELKELEQKH) are disordered. Threonine 1177 carries the post-translational modification Phosphothreonine. Phosphoserine occurs at positions 1684 and 1722. Disordered regions lie at residues 1744 to 1800 (ELEE…LRSK) and 1866 to 1972 (EQYK…KASE). Polar residues predominate over residues 1762–1788 (ATQQAEQLSNELATERSTAQKNESARQ). Basic and acidic residues-rich tracts occupy residues 1789-1800 (QLERQNKELRSK) and 1866-1876 (EQYKEQAEKGN). Residues 1935–1972 (SFVPSRRSGGRRVIENADGSEEETDTRDADFNGTKASE) form a C-terminal region. Serine 1954 bears the Phosphoserine mark. Threonine 1958 is subject to Phosphothreonine. Serine 1971 bears the Phosphoserine mark.

It belongs to the TRAFAC class myosin-kinesin ATPase superfamily. Myosin family. Muscle myosin is a hexameric protein that consists of 2 heavy chain subunits (MHC), 2 alkali light chain subunits (MLC) and 2 regulatory light chain subunits (MLC-2). In terms of tissue distribution, smooth muscle; expressed in the umbilical artery, bladder, esophagus and trachea. Isoform 1 is mostly found in slowly contracting tonic muscles.

It localises to the melanosome. Its function is as follows. Muscle contraction. This chain is Myosin-11 (MYH11), found in Homo sapiens (Human).